Consider the following 260-residue polypeptide: Cytochrome c oxidase subunit 2 (260 aa).

At 1-41 (MIVLKWLFFTISPCDAAEPWQLGFQDAATPIMQGIIDLHHD) the chain is on the mitochondrial intermembrane side. A helical membrane pass occupies residues 42-62 (IFFFLILILVFVLWILVRALW). Residues 63-86 (HFHYKKNAIPQRIVHGTTIEILWT) lie on the Mitochondrial matrix side of the membrane. A helical membrane pass occupies residues 87–107 (IFPSIILMFIAIPSFALLYSM). At 108 to 260 (DEVVVDPAIT…NQLIPQTGEA (153 aa)) the chain is on the mitochondrial intermembrane side. Cu cation contacts are provided by histidine 187, cysteine 222, glutamate 224, cysteine 226, histidine 230, and methionine 233. Residue glutamate 224 coordinates Mg(2+).

This sequence belongs to the cytochrome c oxidase subunit 2 family. As to quaternary structure, component of the cytochrome c oxidase (complex IV, CIV), a multisubunit enzyme composed of a catalytic core of 3 subunits and several supernumerary subunits. The complex exists as a monomer or a dimer and forms supercomplexes (SCs) in the inner mitochondrial membrane with ubiquinol-cytochrome c oxidoreductase (cytochrome b-c1 complex, complex III, CIII). Cu cation is required as a cofactor.

The protein localises to the mitochondrion inner membrane. The enzyme catalyses 4 Fe(II)-[cytochrome c] + O2 + 8 H(+)(in) = 4 Fe(III)-[cytochrome c] + 2 H2O + 4 H(+)(out). Component of the cytochrome c oxidase, the last enzyme in the mitochondrial electron transport chain which drives oxidative phosphorylation. The respiratory chain contains 3 multisubunit complexes succinate dehydrogenase (complex II, CII), ubiquinol-cytochrome c oxidoreductase (cytochrome b-c1 complex, complex III, CIII) and cytochrome c oxidase (complex IV, CIV), that cooperate to transfer electrons derived from NADH and succinate to molecular oxygen, creating an electrochemical gradient over the inner membrane that drives transmembrane transport and the ATP synthase. Cytochrome c oxidase is the component of the respiratory chain that catalyzes the reduction of oxygen to water. Electrons originating from reduced cytochrome c in the intermembrane space (IMS) are transferred via the dinuclear copper A center (CU(A)) of subunit 2 and heme A of subunit 1 to the active site in subunit 1, a binuclear center (BNC) formed by heme A3 and copper B (CU(B)). The BNC reduces molecular oxygen to 2 water molecules using 4 electrons from cytochrome c in the IMS and 4 protons from the mitochondrial matrix. The sequence is that of Cytochrome c oxidase subunit 2 (COX2) from Arabidopsis thaliana (Mouse-ear cress).